Reading from the N-terminus, the 620-residue chain is Nuclear cap-binding protein subunit 3 (620 aa).

Lysine 12 is covalently cross-linked (Glycyl lysine isopeptide (Lys-Gly) (interchain with G-Cter in SUMO2)). A compositionally biased stretch (low complexity) spans 15-28 (APAGPALGLPSPEA). The interval 15–42 (APAGPALGLPSPEAESGVDRGEPEPMEV) is disordered. Serine 25 carries the phosphoserine modification. Residue lysine 70 forms a Glycyl lysine isopeptide (Lys-Gly) (interchain with G-Cter in SUMO2) linkage. A Phosphoserine modification is found at serine 73. The RNA recognition motif (RRM) domain stretch occupies residues 126 to 187 (ETIYICGVDE…MSSLPAQDKI (62 aa)). The WLDD motif; essential for 7-methylguanosine-containing mRNA cap binding signature appears at 155 to 158 (WLDD). A compositionally biased stretch (basic and acidic residues) spans 185–198 (DKIRSRDASEDKSA). 3 disordered regions span residues 185–233 (DKIR…LDTL), 332–419 (HSGL…PKKS), and 436–620 (IRNS…EAES). A Glycyl lysine isopeptide (Lys-Gly) (interchain with G-Cter in SUMO2) cross-link involves residue lysine 186. Phosphoserine occurs at positions 209 and 210. Composition is skewed to acidic residues over residues 209–230 (SSDD…DVEL) and 341–365 (EPIE…DMDA). Basic and acidic residues predominate over residues 366 to 388 (DDRVVVEYHEELPALKQPRERSA). At threonine 413 the chain carries Phosphothreonine. Serine 415 is subject to Phosphoserine. Basic and acidic residues-rich tracts occupy residues 459–474 (PPEK…DEKR) and 511–521 (VRREPSSDVHS). A Glycyl lysine isopeptide (Lys-Gly) (interchain with G-Cter in SUMO2) cross-link involves residue lysine 541. Basic and acidic residues-rich tracts occupy residues 554 to 569 (KTKE…RAPG) and 585 to 598 (IKEK…KSRL). A compositionally biased stretch (low complexity) spans 611–620 (ESSSGSEAES). A Phosphoserine modification is found at serine 620.

This sequence belongs to the NCBP3 family. As to quaternary structure, component of an alternative cap-binding complex (CBC) composed of NCBP1/CBP80 and NCBP3. Interacts with SRRT, KPNA3, THOC5 and EIF4A3.

It localises to the nucleus. The protein resides in the cytoplasm. Its function is as follows. Associates with NCBP1/CBP80 to form an alternative cap-binding complex (CBC) which plays a key role in mRNA export. NCBP3 serves as adapter protein linking the capped RNAs (m7GpppG-capped RNA) to NCBP1/CBP80. Unlike the conventional CBC with NCBP2 which binds both small nuclear RNA (snRNA) and messenger (mRNA) and is involved in their export from the nucleus, the alternative CBC with NCBP3 does not bind snRNA and associates only with mRNA thereby playing a role in only mRNA export. The alternative CBC is particularly important in cellular stress situations such as virus infections and the NCBP3 activity is critical to inhibit virus growth. This chain is Nuclear cap-binding protein subunit 3, found in Homo sapiens (Human).